The primary structure comprises 299 residues: Regucalcin (299 aa).

An a divalent metal cation-binding site is contributed by E18. Substrate-binding residues include R101, N103, and E121. K144 carries the post-translational modification N6-succinyllysine. A divalent metal cation is bound by residues N154 and D204. D204 functions as the Proton donor/acceptor in the catalytic mechanism. Residues K244 and K253 each carry the N6-succinyllysine modification.

It belongs to the SMP-30/CGR1 family. In terms of assembly, monomer. Requires Zn(2+) as cofactor. It depends on Mn(2+) as a cofactor. Ca(2+) is required as a cofactor. The cofactor is Mg(2+).

The protein localises to the cytoplasm. It carries out the reaction D-glucono-1,5-lactone + H2O = D-gluconate + H(+). In terms of biological role, gluconolactonase with low activity towards other sugar lactones, including gulonolactone and galactonolactone. Can also hydrolyze diisopropyl phosphorofluoridate and phenylacetate (in vitro). Calcium-binding protein. Modulates Ca(2+) signaling, and Ca(2+)-dependent cellular processes and enzyme activities. The chain is Regucalcin (RGN) from Homo sapiens (Human).